Consider the following 785-residue polypeptide: MDGEEHQIDGDEVNNHENKLNEKKKSWGKLYRPDSFIIEAGQTPTNTGRRSLMSWRTTMSLAFQSLGVVYGDIGTSPLYVYASTFTDGINDKDDVVGVLSLIIYTITLVALLKYVFIVLQANDNGEGGTFALYSLICRYAKMGLIPNQEPEDVELSNYTLELPTTQLRRAHMIKEKLENSKFAKIILFLVTIMGTSMVIGDGILTPSISVLSAVSGIKSLGQNTVVGVSVAILIVLFAFQRFGTDKVGFSFAPIILVWFTFLIGIGLFNLFKHDITVLKALNPLYIIYYFRRTGRQGWISLGGVFLCITGTEAMFADLGHFSVRAVQISFSCVAYPALVTIYCGQAAYLTKHTYNVSNTFYDSIPDPLYWPTFVVAVAASIIASQAMISGAFSVISQSLRMGCFPRVKVVHTSAKYEGQVYIPEINYLLMLACIAVTLAFRTTEKIGHAYGIAVVTVMVITTLMVTLIMLVIWKTNIVWIAIFLVVFGSIEMLYLSSVMYKFTSGGYLPLTITVVLMAMMAIWQYVHVLKYRYELREKISRENAIQMATSPDVNRVPGIGLFYTELVNGITPLFSHYISNLSSVHSVFVLISIKTLPVNRVTSSERFFFRYVGPKDSGMFRCVVRYGYKEDIEEPDEFERHFVYYLKEFIHHEHFMSGGGGEVDETDKEEEPNAETTVVPSSNYVPSSGRIGSAHSSSSDKIRSGRVVQVQSVEDQTELVEKAREKGMVYLMGETEITAEKESSLFKKFIVNHAYNFLKKNCREGDKALAIPRSKLLKVGMTYEL.

Residues 1-60 are Cytoplasmic-facing; the sequence is MDGEEHQIDGDEVNNHENKLNEKKKSWGKLYRPDSFIIEAGQTPTNTGRRSLMSWRTTMS. Ser-35 carries the post-translational modification Phosphoserine. Residues 61 to 81 traverse the membrane as a helical segment; it reads LAFQSLGVVYGDIGTSPLYVY. Topologically, residues 82 to 97 are extracellular; it reads ASTFTDGINDKDDVVG. The helical transmembrane segment at 98 to 118 threads the bilayer; it reads VLSLIIYTITLVALLKYVFIV. The Cytoplasmic segment spans residues 119-184; it reads LQANDNGEGG…EKLENSKFAK (66 aa). A helical transmembrane segment spans residues 185–205; the sequence is IILFLVTIMGTSMVIGDGILT. Topologically, residues 206-218 are extracellular; that stretch reads PSISVLSAVSGIK. Residues 219–239 traverse the membrane as a helical segment; that stretch reads SLGQNTVVGVSVAILIVLFAF. Residues 240-247 are Cytoplasmic-facing; sequence QRFGTDKV. The helical transmembrane segment at 248 to 268 threads the bilayer; it reads GFSFAPIILVWFTFLIGIGLF. The Extracellular segment spans residues 269–297; sequence NLFKHDITVLKALNPLYIIYYFRRTGRQG. A helical transmembrane segment spans residues 298 to 318; sequence WISLGGVFLCITGTEAMFADL. The Cytoplasmic segment spans residues 319 to 327; the sequence is GHFSVRAVQ. The chain crosses the membrane as a helical span at residues 328–348; it reads ISFSCVAYPALVTIYCGQAAY. The Extracellular segment spans residues 349–367; that stretch reads LTKHTYNVSNTFYDSIPDP. Residue Asn-355 is glycosylated (N-linked (GlcNAc...) asparagine). The chain crosses the membrane as a helical span at residues 368 to 388; the sequence is LYWPTFVVAVAASIIASQAMI. Residues 389–419 lie on the Cytoplasmic side of the membrane; sequence SGAFSVISQSLRMGCFPRVKVVHTSAKYEGQ. Residues 420 to 440 form a helical membrane-spanning segment; the sequence is VYIPEINYLLMLACIAVTLAF. The Extracellular segment spans residues 441–451; sequence RTTEKIGHAYG. Residues 452–472 form a helical membrane-spanning segment; it reads IAVVTVMVITTLMVTLIMLVI. At 473 to 476 the chain is on the cytoplasmic side; that stretch reads WKTN. The helical transmembrane segment at 477-497 threads the bilayer; that stretch reads IVWIAIFLVVFGSIEMLYLSS. At 498–501 the chain is on the extracellular side; that stretch reads VMYK. The helical transmembrane segment at 502–522 threads the bilayer; sequence FTSGGYLPLTITVVLMAMMAI. At 523–785 the chain is on the cytoplasmic side; that stretch reads WQYVHVLKYR…LLKVGMTYEL (263 aa). The tract at residues 660-699 is disordered; sequence GGEVDETDKEEEPNAETTVVPSSNYVPSSGRIGSAHSSSS. Residues 662–673 are compositionally biased toward acidic residues; it reads EVDETDKEEEPN. A compositionally biased stretch (polar residues) spans 674–686; that stretch reads AETTVVPSSNYVP. Low complexity predominate over residues 687–697; sequence SSGRIGSAHSS.

This sequence belongs to the HAK/KUP transporter (TC 2.A.72.3) family. Interacts with ILK1. In terms of processing, phosphorylated at the N-terminus (amino acids 1-95) by CIPK23. As to expression, predominantly expressed in the roots.

It localises to the cell membrane. Functionally, high-affinity potassium transporter. Can also transport rubidium and cesium. Is essential with AKT1 for high-affinity potassium uptake in roots during seedling establishment and postgermination growth under low potassium conditions. Mediates potassium uptake by plant roots in response to low potassium conditions, by a calcium-, CBL-, and CIPK-dependent pathway. Positively regulated by the calcium sensors calcineurin B-like genes CBL1, CBL8, CBL9 and CBL10, and by phosphorylation by CIPK23. In Arabidopsis thaliana (Mouse-ear cress), this protein is Potassium transporter 5 (POT5).